Consider the following 515-residue polypeptide: Serine/threonine-protein kinase STE7 (515 aa).

Residues 191 to 466 (LVQLGKIGAG…IHELLHHDLI (276 aa)) enclose the Protein kinase domain. ATP contacts are provided by residues 197–205 (IGAGNSGTV) and K220. D331 serves as the catalytic Proton acceptor. S359 carries the phosphoserine modification. T363 is subject to Phosphothreonine.

Belongs to the protein kinase superfamily. STE Ser/Thr protein kinase family. MAP kinase kinase subfamily.

It catalyses the reaction L-seryl-[protein] + ATP = O-phospho-L-seryl-[protein] + ADP + H(+). It carries out the reaction L-threonyl-[protein] + ATP = O-phospho-L-threonyl-[protein] + ADP + H(+). The enzyme catalyses L-tyrosyl-[protein] + ATP = O-phospho-L-tyrosyl-[protein] + ADP + H(+). Its activity is regulated as follows. Phosphorylated at multiple sites in response to pheromone. In terms of biological role, serine/threonine protein kinase required for cell-type-specific transcription and signal transduction in yeast. It is thought that it is phosphorylated by the ste11 protein kinase and that it can phosphorylate the FUS3 and or KSS1 kinases. The chain is Serine/threonine-protein kinase STE7 (STE7) from Saccharomyces cerevisiae (strain ATCC 204508 / S288c) (Baker's yeast).